The chain runs to 63 residues: Arabinogalactan protein 22 (63 aa).

The N-terminal stretch at 1–27 is a signal peptide; that stretch reads MASLKFPLEILAVFVIISVILLPIAQS. 4-hydroxyproline occurs at positions 32, 34, and 36. O-linked (Ara...) hydroxyproline glycosylation is found at P32, P34, and P36. A lipid anchor (GPI-anchor amidated serine) is attached at S38. A propeptide spans 39 to 63 (removed in mature form); the sequence is DGTSIDQGIAYVLMMVALALTYFIH.

Belongs to the AG-peptide AGP family. Post-translationally, contains 4-hydroxyproline; hydroxylated on Pro-32, Pro-34 and Pro-36. In terms of processing, O-glycosylated on hydroxyprolines; noncontiguous hydroxylproline residues are glycosylated with arabinogalactan.

Its subcellular location is the cell membrane. In terms of biological role, proteoglycan that seems to be implicated in diverse developmental roles such as differentiation, cell-cell recognition, embryogenesis and programmed cell death. The chain is Arabinogalactan protein 22 from Arabidopsis thaliana (Mouse-ear cress).